We begin with the raw amino-acid sequence, 1029 residues long: MNKLVVEIVDASDLMPKDGQGSASPFVEVEFDEQRQRTQTRFKDLNPQWNEKLVFNVGDLKRLNNKTVDVTVYDDRRDNQPGKFLGRVKIAGAVVPLSESESGVQRYPLDKRGLFSNIKGDIALRIYAAPIDGGDFVSPPPDFAEKVMKEDKRFESQEFQFQNQNQNQNHYEQFEDEINNMETLKPTKKKEKESRTFHSIGAHAGGGGGAPPMSQAKQAYPPPPNQPEFRSDFMRAPGPPTGAVMQMQPPRQQNPEFQLIETSPPLAARMRQSYYYRSSGDKTSSTYDLVEQMHYLYVSVVKARDLPVMDVSGSLDPYVEVKLGNYKGLTKHLEKNSNPIWKQIFAFSKERLQSNLLEVTVKDKDLLTKDDFVGRVHIDLTEVPLRVPPDSPLAPQWYRLEDKKGMKTNRGEIMLAVWMGTQADESFPDAWHSDAHRVSHSNLSNTRSKVYFSPKLYYLRIHVMEAQDLVPSDKGRVPDAIVKIQAGNQMRATRTPQMRTMNPQWHEELMFVVSEPFEDMVIVSVDDRIGPGKDEILGRVFIPVRDVPVRQEVGKMPDPRWFNLQRHSMSMEEENEKRKEKFSSKILLRVCIEAGYHVLDESTHFSSDLQPSSKHLRKPSIGILELGILSARNLMPMKGKDGRMTDPYCVAKYGNKWVRTRTLLDALAPKWNEQYTWEVHDPCTVITIGVFDNSHVNDGGDFKDQRIGKVRVRLSTLETDRVYTHFYPLLVLTPGGLKKNGELQLALRYTCTGFVNMMAQYGRPLLPKMHYIQPIPVRHIDLLRHQAMQIVATRLSRSEPPLRREVVEYMLDVDYHMFSLRRSKANFSRIMSLLSSVTLVCKWFNDICTWRNPITTCLVHVLFLILVCYPELILPTVFLYLFVIGMWNYRYRPRHPPHMDARVSQADNAHPDELDEEFDTFPTSRPADIVRMRYDRLRSVGGRVQTVVGDLATQGERIQALLSWRDPRATALFIVFALIWAVFIYVTPFQVIAIIIGLFMLRHPRFRSRMPSVPANFFKRLPAKSDMLL.

In terms of domain architecture, C2 1 spans 1–111 (MNKLVVEIVD…SGVQRYPLDK (111 aa)). The disordered stretch occupies residues 187–224 (TKKKEKESRTFHSIGAHAGGGGGAPPMSQAKQAYPPPP). C2 domains are found at residues 277–398 (RSSG…PQWY), 437–562 (RVSH…PRWF), and 605–727 (FSSD…THFY). Ca(2+) is bound by residues Asp-310, Asp-316, Asp-363, Asp-365, and Asp-371. 2 consecutive transmembrane segments (helical) span residues 864–884 (LILVCYPELILPTVFLYLFVI) and 976–996 (FALIWAVFIYVTPFQVIAIII).

It belongs to the MCTP family. Requires Ca(2+) as cofactor. As to expression, expressed in the vascular tissues of cotyledons and rosette leaves. Accumulates in roots caps and shoot apical meristems (SAMs). Observed in flowers.

It localises to the cell membrane. The protein resides in the cytoplasm. The protein localises to the endosome membrane. Regulates flowering time under long days. May function as a signaling molecule by regulating the trafficking of other regulators. This chain is Multiple C2 domain and transmembrane region protein 6, found in Arabidopsis thaliana (Mouse-ear cress).